A 456-amino-acid chain; its full sequence is UPF0496 protein 4 (456 aa).

The chain crosses the membrane as a helical span at residues 205–221 (SVTVFVCSIFVAVLSGS).

Belongs to the ROH1 family.

The protein localises to the membrane. In Oryza sativa subsp. indica (Rice), this protein is UPF0496 protein 4.